The following is a 473-amino-acid chain: ATP synthase subunit beta (473 aa).

Residue 156 to 163 (GGAGVGKT) participates in ATP binding.

Belongs to the ATPase alpha/beta chains family. In terms of assembly, F-type ATPases have 2 components, CF(1) - the catalytic core - and CF(0) - the membrane proton channel. CF(1) has five subunits: alpha(3), beta(3), gamma(1), delta(1), epsilon(1). CF(0) has three main subunits: a(1), b(2) and c(9-12). The alpha and beta chains form an alternating ring which encloses part of the gamma chain. CF(1) is attached to CF(0) by a central stalk formed by the gamma and epsilon chains, while a peripheral stalk is formed by the delta and b chains.

The protein resides in the cell inner membrane. The catalysed reaction is ATP + H2O + 4 H(+)(in) = ADP + phosphate + 5 H(+)(out). Functionally, produces ATP from ADP in the presence of a proton gradient across the membrane. The catalytic sites are hosted primarily by the beta subunits. This is ATP synthase subunit beta from Desulfovibrio desulfuricans (strain ATCC 27774 / DSM 6949 / MB).